We begin with the raw amino-acid sequence, 358 residues long: tRNA pseudouridine synthase D (358 aa).

Asp84 acts as the Nucleophile in catalysis. The region spanning 161-312 is the TRUD domain; it reads GTPNYFGPQR…RRSLRLMVAD (152 aa).

This sequence belongs to the pseudouridine synthase TruD family.

The catalysed reaction is uridine(13) in tRNA = pseudouridine(13) in tRNA. In terms of biological role, responsible for synthesis of pseudouridine from uracil-13 in transfer RNAs. The chain is tRNA pseudouridine synthase D from Nitrosococcus oceani (strain ATCC 19707 / BCRC 17464 / JCM 30415 / NCIMB 11848 / C-107).